The sequence spans 87 residues: Sodium channel neurotoxin MeuNaTxalpha-5* (87 aa).

Residues 1 to 19 (MNYLILISFALLVITGVES) form the signal peptide. In terms of domain architecture, LCN-type CS-alpha/beta spans 21 to 85 (RDAYIAKPHN…VPIRIPGKCH (65 aa)). 4 cysteine pairs are disulfide-bonded: Cys-31/Cys-84, Cys-35/Cys-57, Cys-43/Cys-67, and Cys-47/Cys-69. The propeptide at 86–87 (RR) is removed by a carboxypeptidase.

The protein belongs to the long (4 C-C) scorpion toxin superfamily. Sodium channel inhibitor family. Alpha subfamily. As to expression, expressed by the venom gland.

The protein resides in the secreted. Its function is as follows. Alpha toxins bind voltage-independently at site-3 of sodium channels (Nav) and inhibit the inactivation of the activated channels, thereby blocking neuronal transmission. This toxin inhibits inactivation of Nav1.6/SCN8A (EC(50)=790 nM) and drosophila DmNav1 (EC(50)=280 nM). The toxin (1 uM) does not significantly shift the midpoint of activation at the two channels, but induces a significant depolarizing shift in the V(1/2) of inactivation of the channels. Has antimicrobial activity. This chain is Sodium channel neurotoxin MeuNaTxalpha-5*, found in Mesobuthus eupeus (Lesser Asian scorpion).